The following is a 319-amino-acid chain: Protoheme IX farnesyltransferase (319 aa).

The next 9 helical transmembrane spans lie at 34-54 (VMSLVVFTAFAGLVLAPGHIN), 55-75 (PVLGLIAILCIAVGAGASGAL), 95-115 (IPAGRVAPSEALAFGLVLSGF), 119-139 (ILGLAVNWLSAAILAFTIFFY), 155-175 (IVIGGAAGAFPPVIGWACVTG), 182-202 (VVLFLIIFLWTPAHFWALALF), 221-241 (VPTTKNQIVAYAVLTAIIGVV), 244-264 (FMGFASLGYGVVATVLGVIFV), and 291-311 (IFYLFAIFSALLIDRLVAVLM).

This sequence belongs to the UbiA prenyltransferase family. Protoheme IX farnesyltransferase subfamily.

It is found in the cell inner membrane. The catalysed reaction is heme b + (2E,6E)-farnesyl diphosphate + H2O = Fe(II)-heme o + diphosphate. Its pathway is porphyrin-containing compound metabolism; heme O biosynthesis; heme O from protoheme: step 1/1. In terms of biological role, converts heme B (protoheme IX) to heme O by substitution of the vinyl group on carbon 2 of heme B porphyrin ring with a hydroxyethyl farnesyl side group. In Rhizobium rhizogenes (strain K84 / ATCC BAA-868) (Agrobacterium radiobacter), this protein is Protoheme IX farnesyltransferase.